The following is a 240-amino-acid chain: Aspartate/glutamate leucyltransferase (240 aa).

Belongs to the R-transferase family. Bpt subfamily.

It localises to the cytoplasm. It carries out the reaction N-terminal L-glutamyl-[protein] + L-leucyl-tRNA(Leu) = N-terminal L-leucyl-L-glutamyl-[protein] + tRNA(Leu) + H(+). The catalysed reaction is N-terminal L-aspartyl-[protein] + L-leucyl-tRNA(Leu) = N-terminal L-leucyl-L-aspartyl-[protein] + tRNA(Leu) + H(+). Functionally, functions in the N-end rule pathway of protein degradation where it conjugates Leu from its aminoacyl-tRNA to the N-termini of proteins containing an N-terminal aspartate or glutamate. This chain is Aspartate/glutamate leucyltransferase, found in Bordetella avium (strain 197N).